The chain runs to 427 residues: Mitochondrial fission protein ELM1 (427 aa).

In terms of assembly, interacts with DRP3 and DRP3B.

The protein resides in the mitochondrion outer membrane. Plant-specific factor involved in mitochondria fission. Is required for the correct localization of DRP3A from the cytosol to mitochondrial fission sites. Does not seem to be required for peroxisomal division. The polypeptide is Mitochondrial fission protein ELM1 (ELM1) (Arabidopsis thaliana (Mouse-ear cress)).